The primary structure comprises 407 residues: 1-deoxy-D-xylulose 5-phosphate reductoisomerase (407 aa).

6 residues coordinate NADPH: Thr25, Gly26, Ser27, Ile28, Asn53, and Asn136. Lys137 contributes to the 1-deoxy-D-xylulose 5-phosphate binding site. Residue Glu138 participates in NADPH binding. Residue Asp162 coordinates Mn(2+). Ser163, Glu164, Ser188, and His211 together coordinate 1-deoxy-D-xylulose 5-phosphate. Glu164 serves as a coordination point for Mn(2+). An NADPH-binding site is contributed by Gly217. 1-deoxy-D-xylulose 5-phosphate-binding residues include Ser224, Asn229, Lys230, and Glu233. Glu233 contacts Mn(2+).

The protein belongs to the DXR family. It depends on Mg(2+) as a cofactor. Requires Mn(2+) as cofactor.

It carries out the reaction 2-C-methyl-D-erythritol 4-phosphate + NADP(+) = 1-deoxy-D-xylulose 5-phosphate + NADPH + H(+). The protein operates within isoprenoid biosynthesis; isopentenyl diphosphate biosynthesis via DXP pathway; isopentenyl diphosphate from 1-deoxy-D-xylulose 5-phosphate: step 1/6. Catalyzes the NADPH-dependent rearrangement and reduction of 1-deoxy-D-xylulose-5-phosphate (DXP) to 2-C-methyl-D-erythritol 4-phosphate (MEP). The polypeptide is 1-deoxy-D-xylulose 5-phosphate reductoisomerase (Bradyrhizobium sp. (strain ORS 278)).